Reading from the N-terminus, the 656-residue chain is uncharacterized protein (656 aa).

The disordered stretch occupies residues 623–656 (EIDIPGTPASIDPEWSRPPGSITDDHVFDAPLHR). The span at 645-656 (TDDHVFDAPLHR) shows a compositional bias: basic and acidic residues.

This is an uncharacterized protein from Mycobacterium tuberculosis (strain CDC 1551 / Oshkosh).